The following is a 508-amino-acid chain: ADP-ribosylarginine hydrolase CG3568 (508 aa).

ADP-D-ribose-binding residues include R209, G349, G351, G353, V354, W355, W390, D441, N448, E449, G459, and D460.

It catalyses the reaction N(omega)-(ADP-D-ribosyl)-L-arginyl-[protein] + H2O = ADP-D-ribose + L-arginyl-[protein]. The catalysed reaction is N(omega)-(ADP-D-ribosyl)-L-arginine + H2O = ADP-D-ribose + L-arginine. Functionally, protein ADP-ribosyl hydrolase that specifically removes mono-ADP-ribosyl modifications from protein arginine residues. This chain is ADP-ribosylarginine hydrolase CG3568, found in Drosophila melanogaster (Fruit fly).